Here is a 247-residue protein sequence, read N- to C-terminus: Vacuolar iron transporter 1 (247 aa).

Residues 1-33 (MVIAGVSPPTPSSENLLQEHEEKHFTATDVVRD) lie on the Cytoplasmic side of the membrane. A helical transmembrane segment spans residues 34–54 (VIIGVSDGLTVPFALAAGLSG). The Vacuolar portion of the chain corresponds to 55 to 60 (ANVPSS). Residues 61–81 (LILTAGIAEVAAGAISMGLGG) form a helical membrane-spanning segment. Over 82 to 167 (YLAAKSEEDH…PRRALESAMT (86 aa)) the chain is Cytoplasmic. The Fe cation site is built by E99, E102, E110, E113, M146, and E150. A helical transmembrane segment spans residues 168-188 (IALAYVVGGLVPLSPYFFIPF). At 189–191 (AKQ) the chain is on the vacuolar side. Residues 192–212 (AMITSIAVTLLALVVFGYIKG) form a helical membrane-spanning segment. Over 213–219 (RFTGSNP) the chain is Cytoplasmic. The chain crosses the membrane as a helical span at residues 220 to 240 (VLSSIQTAIIGALASAAAYAM). Residues 241-247 (AKAVQSV) are Vacuolar-facing.

The protein belongs to the CCC1 family. Expressed at high levels in the blue epidermal cells of the inner bottom part of the petal (at protein level). No detectable expression in parenchyma and epidermis of the purple segments of the petal, parenchyma of the blue segments, leaf, stem, bulb and root (at protein level). High levels of mRNA in the blue epidermal cells of the inner bottom part of the petal. Low-levels of mRNA in the purple segments of the petal, stem, leaf, root, bulb and pistil.

The protein localises to the vacuole membrane. It catalyses the reaction Fe(2+)(in) = Fe(2+)(out). Functionally, vacuolar iron transporter involved in the transfer of iron ions from the cytosol to the vacuole for intracellular iron storage. Plays an essential role in the development of blue coloration in tulip petals most likely due to the accumulation of ferrous ions that can form complexes with anthocyanins. The polypeptide is Vacuolar iron transporter 1 (Tulipa gesneriana (Garden tulip)).